Consider the following 348-residue polypeptide: Ninja-family protein AFP2 (348 aa).

Positions 186-272 (DSDGGGATGG…VDRKGKGMAT (87 aa)) are disordered. Residues 187–197 (SDGGGATGGGS) show a composition bias toward gly residues. 2 stretches are compositionally biased toward polar residues: residues 207–216 (KNQQGSSNSC) and 228–244 (CSSNSGSQGTERPSVTR). Over residues 247–267 (KVNENENEKRVRSEDSVDRKG) the composition is skewed to basic and acidic residues.

It belongs to the Ninja family. Forms a homodimer and heterodimer with AFP1 and AFP3. Interacts with ABI5/DPBF1, DPBF2, AREB3/DPBF3, EEL/DPBF4, ABF1, ABF3/DPBF5 and ABF4/AREB2.

The protein resides in the nucleus. Acts as a negative regulator of abscisic acid (ABA) response during germination through the ubiquitin-mediated proteolysis of ABI5/DPBF1. This Arabidopsis thaliana (Mouse-ear cress) protein is Ninja-family protein AFP2 (AFP2).